A 362-amino-acid polypeptide reads, in one-letter code: 3-dehydroquinate synthase (362 aa).

Residues 71–76 (DGEKYK), 105–109 (GVIGD), 129–130 (TT), Lys142, and Lys151 contribute to the NAD(+) site. Zn(2+) is bound by residues Glu184, His248, and His265.

The protein belongs to the sugar phosphate cyclases superfamily. Dehydroquinate synthase family. Requires Co(2+) as cofactor. Zn(2+) is required as a cofactor. It depends on NAD(+) as a cofactor.

The protein resides in the cytoplasm. It carries out the reaction 7-phospho-2-dehydro-3-deoxy-D-arabino-heptonate = 3-dehydroquinate + phosphate. Its pathway is metabolic intermediate biosynthesis; chorismate biosynthesis; chorismate from D-erythrose 4-phosphate and phosphoenolpyruvate: step 2/7. Its function is as follows. Catalyzes the conversion of 3-deoxy-D-arabino-heptulosonate 7-phosphate (DAHP) to dehydroquinate (DHQ). The protein is 3-dehydroquinate synthase of Hamiltonella defensa subsp. Acyrthosiphon pisum (strain 5AT).